The following is a 214-amino-acid chain: Adenylate kinase (214 aa).

Residue 15 to 20 (GAGKGT) coordinates ATP. The NMP stretch occupies residues 35–64 (ASGDLFREAIKNQSVIGRKIAAIISQGGYV). AMP contacts are provided by residues Ser-36, Arg-41, 62–64 (GYV), 90–93 (GYPR), and Gln-97. Positions 127-164 (NRVICNNCNSVYNLLFQKPLVENSCDQCSAKLVKRSDD) are LID. Residue Arg-128 participates in ATP binding. 2 residues coordinate Zn(2+): Cys-131 and Cys-134. 137-138 (VY) serves as a coordination point for ATP. The Zn(2+) site is built by Cys-151 and Cys-154. Arg-161 and Arg-172 together coordinate AMP. Leu-200 contributes to the ATP binding site.

The protein belongs to the adenylate kinase family. As to quaternary structure, monomer.

Its subcellular location is the cytoplasm. It carries out the reaction AMP + ATP = 2 ADP. It functions in the pathway purine metabolism; AMP biosynthesis via salvage pathway; AMP from ADP: step 1/1. Catalyzes the reversible transfer of the terminal phosphate group between ATP and AMP. Plays an important role in cellular energy homeostasis and in adenine nucleotide metabolism. In Mycoplasma genitalium (strain ATCC 33530 / DSM 19775 / NCTC 10195 / G37) (Mycoplasmoides genitalium), this protein is Adenylate kinase.